The sequence spans 211 residues: N-(5'-phosphoribosyl)anthranilate isomerase (211 aa).

It belongs to the TrpF family.

It carries out the reaction N-(5-phospho-beta-D-ribosyl)anthranilate = 1-(2-carboxyphenylamino)-1-deoxy-D-ribulose 5-phosphate. It functions in the pathway amino-acid biosynthesis; L-tryptophan biosynthesis; L-tryptophan from chorismate: step 3/5. This Desulfovibrio desulfuricans (strain ATCC 27774 / DSM 6949 / MB) protein is N-(5'-phosphoribosyl)anthranilate isomerase.